Consider the following 1220-residue polypeptide: Limbin (1220 aa).

A signal peptide spans 1–29 (MGATGPTGAGGRATWVLAGNILAAALVLG). Residues 30–210 (SGPRALPPSF…VLPNHGLHAA (181 aa)) are Extracellular-facing. The segment at 38–59 (SFPALGPGSPSRPGPAGPWASS) is disordered. Residues asparagine 100, asparagine 109, and asparagine 130 are each glycosylated (N-linked (GlcNAc...) asparagine). The helical transmembrane segment at 211 to 231 (GFIAAFLISLLLTVAALFFLA) threads the bilayer. Over 232-1220 (RGRCLQGGML…KKANRALGLD (989 aa)) the chain is Cytoplasmic. 4 coiled-coil regions span residues 355–404 (EEYE…SAAE), 563–644 (KQKL…AALD), 854–875 (GELLQERVQRLEAQEAHFAESL), and 920–1005 (QILE…VREE).

As to quaternary structure, component of the EvC complex composed of EFCAB7, IQCE, EVC2 and EVC; built from two subcomplexes, EVC2:EVC and EFCAB7:IQCE. Interacts with EVC. Interacts (via N-terminal end) with EFCAB7. Interacts (via N-terminal end) with IQCE. In terms of tissue distribution, expressed in long and cranial bones, kidney and heart. Strongly expressed in proliferating chondrocytes, osteoblasts and osteoclasts.

The protein localises to the cell membrane. Its subcellular location is the cytoplasm. It is found in the cytoskeleton. The protein resides in the cilium basal body. It localises to the cell projection. The protein localises to the cilium. Its subcellular location is the cilium membrane. It is found in the nucleus. In terms of biological role, component of the EvC complex that positively regulates ciliary Hedgehog (Hh) signaling. Plays a critical role in bone formation and skeletal development. May be involved in early embryonic morphogenesis. The protein is Limbin (Evc2) of Mus musculus (Mouse).